Here is a 263-residue protein sequence, read N- to C-terminus: L-aspartate dehydrogenase (263 aa).

The NAD(+) site is built by Ala-120 and Asn-186. His-216 is an active-site residue.

It belongs to the L-aspartate dehydrogenase family.

It catalyses the reaction L-aspartate + NADP(+) + H2O = oxaloacetate + NH4(+) + NADPH + H(+). It carries out the reaction L-aspartate + NAD(+) + H2O = oxaloacetate + NH4(+) + NADH + H(+). Its pathway is cofactor biosynthesis; NAD(+) biosynthesis; iminoaspartate from L-aspartate (dehydrogenase route): step 1/1. Functionally, specifically catalyzes the NAD or NADP-dependent dehydrogenation of L-aspartate to iminoaspartate. This Acinetobacter baylyi (strain ATCC 33305 / BD413 / ADP1) protein is L-aspartate dehydrogenase.